The chain runs to 783 residues: Polyadenylate-binding protein, cytoplasmic and nuclear (783 aa).

The interval 16–65 is disordered; that stretch reads DLGNTSLGGGDNRAAPAINTNVAPGEYQTADPDTAGPTPSSAAPHPQSSA. Low complexity predominate over residues 54–65; that stretch reads PSSAAPHPQSSA. RRM domains are found at residues 65–143, 153–230, 246–323, and 349–471; these read ASLY…WSQR, GNVF…YHIP, TNIY…RAQK, and VNLY…LAQR. 3 disordered regions span residues 381–428, 596–671, and 752–783; these read MRDA…KGDR, AAAL…AAGG, and VKSQ…EEKA. Basic and acidic residues predominate over residues 396 to 406; that stretch reads GKDKENKKEGE. The span at 407 to 416 shows a compositional bias: acidic residues; sequence QAAEAEGEAE. The segment covering 417-428 has biased composition (basic and acidic residues); it reads GAEKKTEKKGDR. The span at 601 to 614 shows a compositional bias: gly residues; that stretch reads NGRGGPGGPGGRGM. The span at 630–641 shows a compositional bias: low complexity; sequence AGFPPNGRPQNG. Residues 642-655 are compositionally biased toward gly residues; the sequence is NMGGRGGPGRGGNF. The span at 656-671 shows a compositional bias: low complexity; the sequence is AAGRGAPPAGPLAAGG. Residues 676-753 form the PABC domain; that stretch reads SSLLQSQLTA…AMAVYDEYVK (78 aa). Positions 770 to 783 are enriched in basic and acidic residues; that stretch reads EAEKPKEEKAEEKA.

Belongs to the polyadenylate-binding protein type-1 family.

Its subcellular location is the cytoplasm. It is found in the nucleus. Functionally, binds the poly(A) tail of mRNA. Appears to be an important mediator of the multiple roles of the poly(A) tail in mRNA biogenesis, stability and translation. In the nucleus, involved in both mRNA cleavage and polyadenylation. Is also required for efficient mRNA export to the cytoplasm. Acts in concert with a poly(A)-specific nuclease (PAN) to affect poly(A) tail shortening, which may occur concomitantly with either nucleocytoplasmic mRNA transport or translational initiation. In the cytoplasm, stimulates translation initiation and regulates mRNA decay through translation termination-coupled poly(A) shortening, probably mediated by PAN. In Chaetomium globosum (strain ATCC 6205 / CBS 148.51 / DSM 1962 / NBRC 6347 / NRRL 1970) (Soil fungus), this protein is Polyadenylate-binding protein, cytoplasmic and nuclear (PAB1).